Reading from the N-terminus, the 220-residue chain is MSGKRADGGHDGAGDVALIIAVKRLAAAKTRLAPVFSARTRESVVLAMLTDTLTAATRVPSLGSITVITPDEAAAAAAAGLGADVLADPTPEGHPDPLNNAIATAERAVSGSFTNIVALQGDLPALQSQELAEAVAAARAHRRSFVADRLATGTAALFAFGTRLDPRFGSDSSARHRSSGAIELTGAWPGLRCDVDTPTDLAAARRLGVGAATARAIAAH.

The phosphoenolpyruvate site is built by Thr-154, Gly-169, and Ser-172.

This sequence belongs to the CofC family.

It carries out the reaction phosphoenolpyruvate + GTP + H(+) = enolpyruvoyl-2-diphospho-5'-guanosine + diphosphate. The protein operates within cofactor biosynthesis; coenzyme F420 biosynthesis. Functionally, guanylyltransferase that catalyzes the activation of phosphoenolpyruvate (PEP) as enolpyruvoyl-2-diphospho-5'-guanosine, via the condensation of PEP with GTP. It is involved in the biosynthesis of coenzyme F420, a hydride carrier cofactor. In Mycolicibacterium paratuberculosis (strain ATCC BAA-968 / K-10) (Mycobacterium paratuberculosis), this protein is Phosphoenolpyruvate guanylyltransferase.